Consider the following 173-residue polypeptide: MNDLRYPIGQFTYKRPITEEMIDTWIQEIEDLPNELTKAIKDLDQKQLDTPYRVGGWTVRQVVHHVVDSHMNSYIRFKLALTEKNPTIKPYKEEKWAELPDSKLPVDVSLVMLDSLHKRWVNLLYSLELEDLEKTFNHPDTGETKLAAAIGLYAWHGRHHTAHITSLRKRLNW.

Positions 65, 156, and 160 each coordinate Zn(2+).

Belongs to the metal hydrolase YfiT family. Homodimer. It depends on Zn(2+) as a cofactor.

It localises to the cytoplasm. Functionally, possible metal-dependent hydrolase. The sequence is that of Putative metal-dependent hydrolase BCE33L2441 from Bacillus cereus (strain ZK / E33L).